The following is an 84-amino-acid chain: Small ribosomal subunit protein uS17 (84 aa).

It belongs to the universal ribosomal protein uS17 family. As to quaternary structure, part of the 30S ribosomal subunit.

Its function is as follows. One of the primary rRNA binding proteins, it binds specifically to the 5'-end of 16S ribosomal RNA. In Vibrio parahaemolyticus serotype O3:K6 (strain RIMD 2210633), this protein is Small ribosomal subunit protein uS17.